Reading from the N-terminus, the 136-residue chain is Diuretic hormone 41 (136 aa).

Positions 1-26 (MMWWAVWCAAMVAGSVFTAAAPPTDS) are cleaved as a signal peptide. Residues 27 to 76 (IDLMQMDPSLADDESLGFAMQSLSGRYAAAPWLYLLADVSHDPQNGSDRV) constitute a propeptide that is removed on maturation. The residue at position 119 (I119) is an Isoleucine amide. Positions 123–136 (GFHWAPSAKAAKFY) are excised as a propeptide.

The protein belongs to the sauvagine/corticotropin-releasing factor/urotensin I family.

It localises to the secreted. Regulation of fluid secretion. This is Diuretic hormone 41 (dh41) from Bombyx mori (Silk moth).